The primary structure comprises 296 residues: Cytidine deaminase (296 aa).

CMP/dCMP-type deaminase domains follow at residues 47–167 and 186–296; these read TEAE…FGPK and DSAD…IDPV. 88–90 provides a ligand contact to substrate; it reads NLE. Residue His101 participates in Zn(2+) binding. Glu103 acts as the Proton donor in catalysis. Zn(2+)-binding residues include Cys128 and Cys131.

Belongs to the cytidine and deoxycytidylate deaminase family. Homodimer. Zn(2+) serves as cofactor.

It carries out the reaction cytidine + H2O + H(+) = uridine + NH4(+). The enzyme catalyses 2'-deoxycytidine + H2O + H(+) = 2'-deoxyuridine + NH4(+). In terms of biological role, this enzyme scavenges exogenous and endogenous cytidine and 2'-deoxycytidine for UMP synthesis. The sequence is that of Cytidine deaminase from Shewanella baltica (strain OS155 / ATCC BAA-1091).